Reading from the N-terminus, the 353-residue chain is UPF0658 Golgi apparatus membrane protein C23H3.04 (353 aa).

8 helical membrane-spanning segments follow: residues 39–59, 76–96, 103–123, 172–192, 226–246, 249–269, 281–301, and 318–338; these read IFFL…EGYC, SLPI…YLCV, NIIE…YSIV, PFLI…GFLA, LLKI…MVLP, AVVE…ILTL, LMMT…FKII, and MITT…AIGF.

Belongs to the UPF0658 family.

It localises to the golgi apparatus membrane. In Schizosaccharomyces pombe (strain 972 / ATCC 24843) (Fission yeast), this protein is UPF0658 Golgi apparatus membrane protein C23H3.04.